Consider the following 206-residue polypeptide: Cytochrome c oxidase assembly protein CtaG (206 aa).

At 1–12 (MSKKPAGKNSNR) the chain is on the cytoplasmic side. A helical; Signal-anchor for type II membrane protein transmembrane segment spans residues 13 to 35 (IVAAVCLAFFTGMIGMAYAAVPL). Over 36 to 206 (YKMFCQATGY…ISDTEANLGG (171 aa)) the chain is Periplasmic. Positions 184–206 (VASSEPVQGTSKIISDTEANLGG) are disordered. The span at 188 to 206 (EPVQGTSKIISDTEANLGG) shows a compositional bias: polar residues.

Belongs to the COX11/CtaG family.

It localises to the cell inner membrane. Functionally, exerts its effect at some terminal stage of cytochrome c oxidase synthesis, probably by being involved in the insertion of the copper B into subunit I. The protein is Cytochrome c oxidase assembly protein CtaG of Mesorhizobium japonicum (strain LMG 29417 / CECT 9101 / MAFF 303099) (Mesorhizobium loti (strain MAFF 303099)).